The primary structure comprises 397 residues: t-SNARE affecting a late Golgi compartment protein 2 (397 aa).

Residues 1–317 (MFRDRTNLFL…HYQKRTQKCK (317 aa)) lie on the Cytoplasmic side of the membrane. A coiled-coil region spans residues 74–96 (DIAQDVDDYLLEVRRLSEQLAKV). Phosphoserine is present on serine 109. The t-SNARE coiled-coil homology domain maps to 244–306 (EAYLRERDEE…KSADKELNKA (63 aa)). A helical; Anchor for type IV membrane protein transmembrane segment spans residues 318-338 (VILLLTLCVIALFFFVMLKPH). Over 339–397 (GGGSGGRNNGSNKYNNDDNKTVNNSHDDGSNTHINDEESNLPSIVEVTESENDALDDLL) the chain is Vesicular. Residues 341–397 (GSGGRNNGSNKYNNDDNKTVNNSHDDGSNTHINDEESNLPSIVEVTESENDALDDLL) are disordered. Basic and acidic residues predominate over residues 353–374 (NNDDNKTVNNSHDDGSNTHIND). Residues 386–397 (TESENDALDDLL) show a composition bias toward acidic residues.

The protein belongs to the syntaxin family. In terms of assembly, interacts with VPS45.

The protein resides in the golgi apparatus. Its subcellular location is the trans-Golgi network membrane. The protein localises to the endosome membrane. T-SNARE that functions in transport from the endosome to the late Golgi and on the endocytic pathway. The polypeptide is t-SNARE affecting a late Golgi compartment protein 2 (TLG2) (Saccharomyces cerevisiae (strain ATCC 204508 / S288c) (Baker's yeast)).